The following is a 395-amino-acid chain: Putative F-box protein At5g42430 (395 aa).

The region spanning 4–53 (EENSDSIPIDLILEILSRLPAKSITRFHCVSKLWGSMLCRPYFNELFLTI) is the F-box domain.

This is Putative F-box protein At5g42430 from Arabidopsis thaliana (Mouse-ear cress).